The following is a 159-amino-acid chain: MIALYPGSFDPITFGHLDIIERASRLFSKVIVAVLKNPNKTPLFTPEQRQAQILLSVAHLKNVEVDTFSGLTVAYARQRGARVIVRGLRVLSDFDVELQMAHTNKLLAPELETLFLATASEHSFVSSSLVKEVAKLGGPIDHLVPPPVAQDLRERFPLT.

Serine 8 provides a ligand contact to substrate. ATP is bound by residues 8-9 and histidine 16; that span reads SF. Lysine 40, threonine 72, and arginine 86 together coordinate substrate. Residues 87-89, glutamate 97, and 122-128 each bind ATP; these read GLR and HSFVSSS.

This sequence belongs to the bacterial CoaD family. Homohexamer. Requires Mg(2+) as cofactor.

It is found in the cytoplasm. It carries out the reaction (R)-4'-phosphopantetheine + ATP + H(+) = 3'-dephospho-CoA + diphosphate. It functions in the pathway cofactor biosynthesis; coenzyme A biosynthesis; CoA from (R)-pantothenate: step 4/5. Its function is as follows. Reversibly transfers an adenylyl group from ATP to 4'-phosphopantetheine, yielding dephospho-CoA (dPCoA) and pyrophosphate. The chain is Phosphopantetheine adenylyltransferase from Synechococcus sp. (strain JA-3-3Ab) (Cyanobacteria bacterium Yellowstone A-Prime).